Reading from the N-terminus, the 509-residue chain is Probable xyloglucan galactosyltransferase GT12 (509 aa).

At 1-3 the chain is on the cytoplasmic side; it reads MMK. Residues 4-24 form a helical; Signal-anchor for type II membrane protein membrane-spanning segment; it reads PVPKLWVVISSAFVFCLLVLF. Topologically, residues 25–509 are lumenal; it reads QINKSDLIEA…KLEIIHEKTA (485 aa). Asn27, Asn59, Asn65, Asn169, Asn170, Asn195, Asn257, and Asn416 each carry an N-linked (GlcNAc...) asparagine glycan.

This sequence belongs to the glycosyltransferase 47 family. In terms of tissue distribution, expressed in pollen grains.

Its subcellular location is the golgi apparatus membrane. Its function is as follows. Functions in xyloglucan synthesis by adding side chains to the xylosylated glucan backbone. Involved in the galactosylation of hemicellulose xyloglucan. The chain is Probable xyloglucan galactosyltransferase GT12 from Arabidopsis thaliana (Mouse-ear cress).